A 179-amino-acid polypeptide reads, in one-letter code: Adenine phosphoribosyltransferase (179 aa).

The protein belongs to the purine/pyrimidine phosphoribosyltransferase family. As to quaternary structure, homodimer.

It localises to the cytoplasm. It carries out the reaction AMP + diphosphate = 5-phospho-alpha-D-ribose 1-diphosphate + adenine. It participates in purine metabolism; AMP biosynthesis via salvage pathway; AMP from adenine: step 1/1. Its function is as follows. Catalyzes a salvage reaction resulting in the formation of AMP, that is energically less costly than de novo synthesis. The polypeptide is Adenine phosphoribosyltransferase (Ruegeria pomeroyi (strain ATCC 700808 / DSM 15171 / DSS-3) (Silicibacter pomeroyi)).